Consider the following 174-residue polypeptide: Regenerating islet-derived protein 3-alpha (174 aa).

An N-terminal signal peptide occupies residues Met1–Gly25. Positions Glu26–Arg36 are excised as a propeptide. Disulfide bonds link Cys39–Cys50, Cys67–Cys170, and Cys145–Cys162. One can recognise a C-type lectin domain in the interval Tyr46 to Lys171. The tract at residues Trp102–Gly117 is sufficient to activate EXTL3. Zn(2+) is bound by residues His106 and Glu120.

Forms a hexameric membrane-permeabilizing oligomeric pore on membrane phospholipids. The hexamer is formed by three dimers related by helical symmetry. Forms filaments, filamentation traps pore complexes and limits damage to host cells. Interacts with EXTL3. Proteolytic processing by trypsin removes an inhibitory N-terminal propeptide and is essential for peptidoglycan binding and antibacterial activity. Low expression found in healthy pancreas.

The protein localises to the secreted. In terms of biological role, bactericidal C-type lectin. The lack of the EPN motif may explain its inability to bind peptidoglycan. Acts as a hormone in response to different stimuli like anti-inflammatory signals, such as IL17A, or gut microbiome. Secreted by different cell types to activate its receptor EXTL3 and induce cell specific signaling pathways. Induced by IL17A in keratinocytes, regulates keratinocyte proliferation and differentiation after skin injury via activation of EXTL3-PI3K-AKT signaling pathway. In parallel, inhibits skin inflammation through the inhibition of inflammatory cytokines such as IL6 and TNF. In pancreas, is able to permealize beta-cells membrane and stimulate their proliferation. The sequence is that of Regenerating islet-derived protein 3-alpha (Reg3a) from Rattus norvegicus (Rat).